The chain runs to 149 residues: Transcriptional repressor NrdR (149 aa).

A zinc finger lies at 3 to 34 (CPFCSATDTKVIDSRLVADGHQVRRRRECVQC). Residues 49-139 (PRVVKQDGSR…VYRAFEDVSE (91 aa)) form the ATP-cone domain.

Belongs to the NrdR family. Requires Zn(2+) as cofactor.

Negatively regulates transcription of bacterial ribonucleotide reductase nrd genes and operons by binding to NrdR-boxes. This is Transcriptional repressor NrdR from Shewanella piezotolerans (strain WP3 / JCM 13877).